A 107-amino-acid chain; its full sequence is Heme-degrading monooxygenase (107 aa).

The ABM domain occupies 2-93 (VIVANKTLIR…DYILGNEIEF (92 aa)). Asn-6 contributes to the Fe cation binding site. Residue His-76 participates in heme binding.

It belongs to the antibiotic biosynthesis monooxygenase family. Heme-degrading monooxygenase IsdG subfamily. In terms of assembly, homodimer.

It localises to the cytoplasm. It catalyses the reaction heme b + 3 reduced [NADPH--hemoprotein reductase] + 3 O2 = biliverdin IXalpha + CO + Fe(2+) + 3 oxidized [NADPH--hemoprotein reductase] + 3 H2O + H(+). In terms of biological role, allows bacterial pathogens to use the host heme as an iron source. Catalyzes the oxidative degradation of the heme macrocyclic porphyrin ring to the biliverdin in the presence of a suitable electron donor such as ascorbate or NADPH--cytochrome P450 reductase, with subsequent release of free iron. The protein is Heme-degrading monooxygenase of Shouchella clausii (strain KSM-K16) (Alkalihalobacillus clausii).